The primary structure comprises 162 residues: Putative 4-hydroxy-4-methyl-2-oxoglutarate aldolase (162 aa).

Substrate is bound by residues 75–78 (GDML) and Arg97. Position 98 (Asp98) interacts with a divalent metal cation.

Belongs to the class II aldolase/RraA-like family. As to quaternary structure, homotrimer. Requires a divalent metal cation as cofactor.

The catalysed reaction is 4-hydroxy-4-methyl-2-oxoglutarate = 2 pyruvate. The enzyme catalyses oxaloacetate + H(+) = pyruvate + CO2. In terms of biological role, catalyzes the aldol cleavage of 4-hydroxy-4-methyl-2-oxoglutarate (HMG) into 2 molecules of pyruvate. Also contains a secondary oxaloacetate (OAA) decarboxylase activity due to the common pyruvate enolate transition state formed following C-C bond cleavage in the retro-aldol and decarboxylation reactions. The polypeptide is Putative 4-hydroxy-4-methyl-2-oxoglutarate aldolase (Azotobacter vinelandii (strain DJ / ATCC BAA-1303)).